The primary structure comprises 1346 residues: Adhesion G protein-coupled receptor A3 (1346 aa).

Residues 1-21 (MSVLCVLLLAFVLPLRGSSSA) form the signal peptide. The disordered stretch occupies residues 18–45 (SSSAGSTECKTYDERSRSAGKSSPSGAT). Topologically, residues 22 to 739 (GSTECKTYDE…NVFIFRPLHP (718 aa)) are extracellular. LRR repeat units lie at residues 66 to 90 (FPNR…SFVG), 91 to 114 (LSSL…AFYG), 116 to 138 (FSLK…VFKG), and 139 to 162 (LTNL…IFDS). The LRRCT domain occupies 176–223 (LLCDCNLQWLVVWIKEKAIGVKETRCSFPRSLQGQLITTLRAETLTCD). One can recognise an Ig-like domain in the interval 229–327 (PSFQMTPSQH…GNNTRTVHIV (99 aa)). Residues Cys-251 and Cys-311 are joined by a disulfide bond. LRR repeat units lie at residues 503–529 (LQRI…ALEA), 574–600 (TSNL…LFSS), and 611–632 (VYKL…GNSS). Positions 563-728 (PERQLSFKCN…AVLMDLNRTG (166 aa)) constitute a GAIN-B domain. The tract at residues 679-728 (PAFWNFSLQGGQGGWQSDGCRILHQDDNFTTVSCHSLNSYAVLMDLNRTG) is GPS. Cys-698 and Cys-712 are oxidised to a cystine. Residues 740–760 (VIYSTALVLVLCLLSVIVSYI) traverse the membrane as a helical segment. Over 761–773 (YHHKSVRISKKCW) the chain is Cytoplasmic. The chain crosses the membrane as a helical span at residues 774–794 (HMLVNLCLHILLTCAVFVGGI). The Extracellular portion of the chain corresponds to 795 to 804 (NQTYNASVCQ). A helical transmembrane segment spans residues 805-825 (AMGIVLHYSTLATALWSGVTA). Residues 826-854 (RNIYKQVTRKAKRYEELDEPPPPPRPMLR) are Cytoplasmic-facing. A helical transmembrane segment spans residues 855–875 (FYLIGGGIPIIVCGITAAANI). Over 876–897 (KNYGSQVNAPYCWMAWEPSLGA) the chain is Extracellular. The chain crosses the membrane as a helical span at residues 898-918 (FYGPAAFIVFVDCMYFLSILI). The Cytoplasmic portion of the chain corresponds to 919-977 (QLRRHPERRFELKEQSEEQQHLSVTEATEITPVHLESSPTAQPVPMSALENEHTFVSQL). A helical membrane pass occupies residues 978 to 998 (MGVAGSLTLYAALWVFGALAI). The Extracellular segment spans residues 999–1005 (SQEHPAD). A helical transmembrane segment spans residues 1006–1026 (LVFACLFGALALGLGAFLVAH). The Cytoplasmic portion of the chain corresponds to 1027-1346 (HCVNRQDMRR…TGLWKHETTV (320 aa)). Positions 1157 to 1169 (SVNNNNLPGNANI) are enriched in polar residues. Disordered stretches follow at residues 1157 to 1188 (SVNN…RASR) and 1202 to 1284 (SVEG…DGSE). Composition is skewed to basic residues over residues 1173 to 1187 (PGRH…HRAS) and 1212 to 1226 (NKRH…RNSR). Low complexity predominate over residues 1238-1252 (QSQLQQDSSDAASTS). Over residues 1266–1280 (IGNGFGHGISNGGLL) the composition is skewed to gly residues. The short motif at 1344-1346 (TTV) is the PDZ-binding element.

Belongs to the G-protein coupled receptor 2 family. Adhesion G-protein coupled receptor (ADGR) subfamily. In terms of assembly, interacts (via PDZ-binding motif) with disheveled proteins; leading to the localization of dishevelled proteins to specific membrane subdomains. In terms of tissue distribution, ubiquitously expressed at very low levels.

Its subcellular location is the cell membrane. Functionally, orphan receptor that acts as a critical modulator of planar cell polarity during gastrulation. Controls the localization of dishevelled. This Danio rerio (Zebrafish) protein is Adhesion G protein-coupled receptor A3 (adgra3).